The primary structure comprises 242 residues: Large ribosomal subunit protein uL1 (242 aa).

The protein belongs to the universal ribosomal protein uL1 family. Part of the 50S ribosomal subunit.

Functionally, binds directly to 23S rRNA. The L1 stalk is quite mobile in the ribosome, and is involved in E site tRNA release. In terms of biological role, protein L1 is also a translational repressor protein, it controls the translation of the L11 operon by binding to its mRNA. This chain is Large ribosomal subunit protein uL1, found in Persephonella marina (strain DSM 14350 / EX-H1).